The chain runs to 213 residues: THAP domain-containing protein 1 (213 aa).

The THAP-type zinc finger occupies 5–57 (CSAYGCKNRYDKDKPVSFHKFPLTRPSLCKKWEAAVRRKNFKPTKYSSICSEH). Residues 134 to 137 (DHNY) carry the HCFC1-binding motif (HBM) motif. Residues 139 to 190 (VEDTMHQRKRIHQLEQQVEKLRKKLKTAQQRCRRQERQLEKLKEVVHFQKEK) are a coiled coil.

The protein belongs to the THAP1 family. As to quaternary structure, interacts with PAWR. Component of a THAP1/THAP3-HCFC1-OGT complex that contains, either THAP1 or THAP3, HCFC1 and OGT. Interacts with OGT. Interacts (via the HBM) with HCFC1 (via the Kelch-repeat domain); the interaction recruits HCFC1 to the RRM1 promoter.

The protein localises to the nucleus. Its subcellular location is the nucleoplasm. The protein resides in the PML body. In terms of biological role, DNA-binding transcription regulator that regulates endothelial cell proliferation and G1/S cell-cycle progression. Specifically binds the 5'-[AT]NTNN[GT]GGCA[AGT]-3' core DNA sequence and acts by modulating expression of pRB-E2F cell-cycle target genes, including RRM1. May also have pro-apoptotic activity by potentiating both serum-withdrawal and TNF-induced apoptosis. In Bos taurus (Bovine), this protein is THAP domain-containing protein 1 (THAP1).